Reading from the N-terminus, the 695-residue chain is MAKDFLLEVGIEEMPARFLGPALTQLKEQTVKTLQELRIEYADIQTYGTPRRLVLYIKDLAENQAALEKEVKGPAKKAAFDAAGNPTKAILGFTRSQGVSMEDLVVRSIGQVEYLYALKREEGRPTAQVLAEICPGLIAGLHFPKPMRWGELELRFARPIRWLLALFGEAVVPFELANLQSNRFTYGHRFLSTGDLSIANPEDYFTKIRGAYVLIDPAERKELIWQQVQELATAEGGVVEKDEDLLDEITNILEWPTALCGTFDEDYLKLPGAVLVTPMREHQRYFPVVSNEGKLLNKFIAVRNGTRAYIEIVTAGNEKVLRARLADAAFFFEEDLKQPLASKVNGLQKVVFLEGLGSIADKVDRIGAMADHLAETLGANEEQRENIQRGALLAKADLITNMVYEFPELQGEMGREYALRNGEAPEVAEAIFEHYLPRFAGDLLPETLAGSVLSVADKMDSIVGCFAIGIQPTGSQDPYALRRQALGICHMLIEGNIHLSLRELVQWAYQGYHEGVELKQDLNQVITEIEEFFKQRLKGILNDRGLSYDTVDAVLTAGFDDIADVVDRGMALAAFRELPAFAALMTAFNRANNLAKHATTTQVQEVHLEHSAEQELYGLLTKLEGEVRPLLEQKNYALALQKIATIQSPLDTFFESVMVMVEDEAVKTNRLALLKKLVGLSMNVADFSKIVVETK.

It belongs to the class-II aminoacyl-tRNA synthetase family. As to quaternary structure, tetramer of two alpha and two beta subunits.

The protein resides in the cytoplasm. The catalysed reaction is tRNA(Gly) + glycine + ATP = glycyl-tRNA(Gly) + AMP + diphosphate. The protein is Glycine--tRNA ligase beta subunit of Desulforamulus reducens (strain ATCC BAA-1160 / DSM 100696 / MI-1) (Desulfotomaculum reducens).